A 67-amino-acid polypeptide reads, in one-letter code: Large ribosomal subunit protein bL35 (67 aa).

It belongs to the bacterial ribosomal protein bL35 family.

The sequence is that of Large ribosomal subunit protein bL35 from Rhizorhabdus wittichii (strain DSM 6014 / CCUG 31198 / JCM 15750 / NBRC 105917 / EY 4224 / RW1) (Sphingomonas wittichii).